Consider the following 139-residue polypeptide: MRVTQGCFSFLPDLSDDQIKQQVSYAMSKGWAVSVEWTDDPHPRNSYWELWGLPLFDVKDPAAVMYELAECRKVNPEGYIKINAFDASIGTESCVMSFIVQRPITEPGFYLERNEIHGRNIQYTISSYAVQARPSGDRY.

The protein belongs to the RuBisCO small chain family. As to quaternary structure, heterohexadecamer of 8 large and 8 small subunits.

The protein localises to the plastid. Its subcellular location is the chloroplast. Functionally, ruBisCO catalyzes two reactions: the carboxylation of D-ribulose 1,5-bisphosphate, the primary event in carbon dioxide fixation, as well as the oxidative fragmentation of the pentose substrate in the photorespiration process. Both reactions occur simultaneously and in competition at the same active site. Although the small subunit is not catalytic it is essential for maximal activity. The chain is Ribulose bisphosphate carboxylase small subunit from Ectocarpus siliculosus (Brown alga).